The primary structure comprises 468 residues: BTB and MATH domain-containing protein 45 (468 aa).

In terms of domain architecture, MATH spans 7 to 124 (VFELSHVFKD…DDSIIIEVLV (118 aa)). BTB domains are found at residues 148-215 (SDGI…IDDD) and 304-368 (SDVI…IDDL).

In Caenorhabditis elegans, this protein is BTB and MATH domain-containing protein 45 (bath-45).